The primary structure comprises 488 residues: RuvB-like helicase 1 (488 aa).

A compositionally biased stretch (polar residues) spans 1–11 (MATANTSSGSM). Residues 1–29 (MATANTSSGSMNGVGPVTMDSSTSGASRE) are disordered. 87-94 (GGPGTGKT) contacts ATP.

This sequence belongs to the RuvB family. In terms of assembly, may form heterododecamers with RVB2. Component of the SWR1 chromatin remodeling complex, the INO80 chromatin remodeling complex, and of the R2TP complex.

The protein resides in the nucleus. The catalysed reaction is ATP + H2O = ADP + phosphate + H(+). Its function is as follows. DNA helicase which participates in several chromatin remodeling complexes, including the SWR1 and the INO80 complexes. The SWR1 complex mediates the ATP-dependent exchange of histone H2A for the H2A variant HZT1 leading to transcriptional regulation of selected genes by chromatin remodeling. The INO80 complex remodels chromatin by shifting nucleosomes and is involved in DNA repair. Also involved in pre-rRNA processing. In Mycosarcoma maydis (Corn smut fungus), this protein is RuvB-like helicase 1 (RVB1).